The following is a 505-amino-acid chain: COMPASS component BRE2 (505 aa).

Positions 70–295 (SANPFFTILG…LKQETTNKEF (226 aa)) constitute a B30.2/SPRY domain. Ser-227 carries the phosphoserine modification. The segment at 271 to 290 (EPWREDAENGPSRKKLKQET) is disordered. Lys-318 is a DNA binding site. A disordered region spans residues 398–420 (RDESNDKNTTSAKKKKQQQKKKK). Residues 409-420 (AKKKKQQQKKKK) are compositionally biased toward basic residues.

Belongs to the cclA family. As to quaternary structure, component of the Set1C/COMPASS complex which consists of SET1(2), BRE2(2), SPP1(2), SDC1(1), SHG1(1), SWD1(1), SWD2(1), and SWD3(1). Interacts directly with SDC1.

The protein localises to the nucleus. The protein resides in the chromosome. It localises to the telomere. Functionally, component of the Set1C/COMPASS complex that specifically mono-, di- and trimethylates histone H3 to form H3K4me1/2/3, which subsequently plays a role in telomere length maintenance and transcription elongation regulation. COMPASS recognizes ubiquitinated H2B on one face of the nucleosome which stimulates the methylation of H3 on the opposing face. This is COMPASS component BRE2 from Saccharomyces cerevisiae (strain ATCC 204508 / S288c) (Baker's yeast).